Consider the following 354-residue polypeptide: 4-hydroxy-2-oxovalerate aldolase 5 (354 aa).

The Pyruvate carboxyltransferase domain occupies 11 to 263; it reads VTVHDMCLRD…ETGCDLFKLM (253 aa). 19-20 serves as a coordination point for substrate; sequence RD. Asp20 lines the Mn(2+) pocket. Residue His23 is the Proton acceptor of the active site. Residues Ser173 and His202 each contribute to the substrate site. Mn(2+) contacts are provided by His202 and His204. Tyr293 provides a ligand contact to substrate.

This sequence belongs to the 4-hydroxy-2-oxovalerate aldolase family.

It carries out the reaction (S)-4-hydroxy-2-oxopentanoate = acetaldehyde + pyruvate. This is 4-hydroxy-2-oxovalerate aldolase 5 from Dechloromonas aromatica (strain RCB).